The following is a 1663-amino-acid chain: Centrosomal protein of 152 kDa (1663 aa).

Residues 1-60 form a disordered region; that stretch reads MSIDFDSGALQTQQEDEEYDKEDYAREQELQQLLTDLPHDMLDDSLSSSPEPSYSDCSGH. The span at 44-57 shows a compositional bias: low complexity; it reads DSLSSSPEPSYSDC. Coiled coils occupy residues 266-516, 571-664, 696-796, 843-886, 946-977, 1014-1047, and 1182-1288; these read LQVL…ARLG, ELER…KHLL, QDKK…VTAK, SDCI…VEVA, DFTVRQKEFEEKIASMKRELELKAEESQALLK, RNKLTDTLSTAKVEFEKQKNELIAQKDREMAERL, and VQQL…KNDM. Disordered stretches follow at residues 1383–1408 and 1595–1628; these read ETTQDQRSLQKPAHSHQNNNPLNQNI and KRKDENSGRKYSNKIQEPSATGIHPESKLFSDVG. A compositionally biased stretch (polar residues) spans 1603-1613; the sequence is RKYSNKIQEPS.

It belongs to the CEP152 family.

The protein localises to the cytoplasm. It is found in the cytoskeleton. It localises to the microtubule organizing center. The protein resides in the centrosome. Its subcellular location is the centriole. In terms of biological role, necessary for centrosome duplication; the function also seems to involve cep63, cdk5rap2 and wdr62 through a stepwise assembled complex at the centrosome that recruits cdk2 required for centriole duplication. Acts as a molecular scaffold facilitating the interaction of plk4 and cpap, 2 molecules involved in centriole formation. Also plays a key role in deuterosome-mediated centriole amplification in multiciliated that can generate more than 100 centrioles. Overexpression of cep152 can drive amplification of centrioles. This chain is Centrosomal protein of 152 kDa (cep152), found in Xenopus laevis (African clawed frog).